We begin with the raw amino-acid sequence, 821 residues long: Zinc finger protein 41 (821 aa).

Residues 1–55 (MAANGDSPPWSPALAAEGRGSSCEVRRERTPEARIHSVKRYPDLSPGPKGRSSAD) form a disordered region. Over residues 24 to 35 (EVRRERTPEARI) the composition is skewed to basic and acidic residues. Positions 69–140 (VSFEDVTVDF…EGEAPHQSCS (72 aa)) constitute a KRAB domain. Residue K120 forms a Glycyl lysine isopeptide (Lys-Gly) (interchain with G-Cter in SUMO2) linkage. Residues 313 to 335 (YVCTECVMGFTQKSHLFEHQRIH) form a C2H2-type 1 zinc finger. Residues 341–364 (RECDKSNKVFPQKPQVDVHPSVYT) form a C2H2-type 2; degenerate zinc finger. 10 C2H2-type zinc fingers span residues 369–391 (YLCT…QKIH), 397–419 (YKCS…LRIH), 425–447 (YECS…QKTH), 453–475 (YECN…QRIH), 481–503 (YVCA…QRIH), 509–531 (YECS…QRIH), 537–559 (YICT…QKTH), 565–587 (YMCA…QKTH), 593–615 (YKCN…QKSH), and 621–643 (YECK…QRIH). K647 is covalently cross-linked (Glycyl lysine isopeptide (Lys-Gly) (interchain with G-Cter in SUMO2)). C2H2-type zinc fingers lie at residues 649–671 (YVCP…HRIH), 677–699 (YECS…QKIH), 705–727 (NICA…QKIH), 733–755 (YECG…QKSH), 761–783 (YECS…QIIH), and 789–811 (YACT…QKMH).

Belongs to the krueppel C2H2-type zinc-finger protein family. Expressed in the heart, brain, placenta, lung, liver, skeletal muscle, kidney and pancreas.

The protein resides in the nucleus. May be involved in transcriptional regulation. This is Zinc finger protein 41 (ZNF41) from Homo sapiens (Human).